The sequence spans 501 residues: Glycerol kinase (501 aa).

Thr-16 contributes to the ADP binding site. ATP contacts are provided by Thr-16, Thr-17, and Ser-18. Residue Thr-16 coordinates sn-glycerol 3-phosphate. Arg-20 is a binding site for ADP. Sn-glycerol 3-phosphate contacts are provided by Arg-84, Glu-85, Tyr-135, and Asp-242. Glycerol-binding residues include Arg-84, Glu-85, Tyr-135, Asp-242, and Gln-243. ADP is bound by residues Thr-264 and Gly-307. Positions 264, 307, 311, and 408 each coordinate ATP. Gly-408 is an ADP binding site.

This sequence belongs to the FGGY kinase family.

It catalyses the reaction glycerol + ATP = sn-glycerol 3-phosphate + ADP + H(+). It functions in the pathway polyol metabolism; glycerol degradation via glycerol kinase pathway; sn-glycerol 3-phosphate from glycerol: step 1/1. Key enzyme in the regulation of glycerol uptake and metabolism. Catalyzes the phosphorylation of glycerol to yield sn-glycerol 3-phosphate. The sequence is that of Glycerol kinase from Saccharolobus islandicus (strain M.16.27) (Sulfolobus islandicus).